Reading from the N-terminus, the 158-residue chain is uncharacterized protein (158 aa).

The N-terminal stretch at 1–30 (MNKKFLKCGTLFLISCSILGSTIPAVTVFS) is a signal peptide.

This is an uncharacterized protein from Streptococcus pneumoniae serotype 2 (strain D39 / NCTC 7466).